The sequence spans 213 residues: Glycerol-3-phosphate acyltransferase (213 aa).

Helical transmembrane passes span 2–22 (ITIV…GLWI), 52–74 (AGMA…PIIF), 81–100 (PLIF…FAGF), 112–132 (VIFG…FGAL), 143–163 (VTAS…GFIL), and 164–184 (SNYD…IIIR).

Belongs to the PlsY family. Probably interacts with PlsX.

It localises to the cell membrane. The catalysed reaction is an acyl phosphate + sn-glycerol 3-phosphate = a 1-acyl-sn-glycero-3-phosphate + phosphate. It functions in the pathway lipid metabolism; phospholipid metabolism. Catalyzes the transfer of an acyl group from acyl-phosphate (acyl-PO(4)) to glycerol-3-phosphate (G3P) to form lysophosphatidic acid (LPA). This enzyme utilizes acyl-phosphate as fatty acyl donor, but not acyl-CoA or acyl-ACP. The sequence is that of Glycerol-3-phosphate acyltransferase from Streptococcus pneumoniae (strain ATCC 700669 / Spain 23F-1).